A 427-amino-acid chain; its full sequence is Dihydroorotase (427 aa).

Residues histidine 60 and histidine 62 each coordinate Zn(2+). Substrate is bound by residues 62 to 64 (HLR) and asparagine 94. Zn(2+)-binding residues include aspartate 151, histidine 178, and histidine 231. Substrate is bound at residue asparagine 277. Aspartate 304 is a Zn(2+) binding site. The active site involves aspartate 304. Residues histidine 308 and 322-323 (FG) contribute to the substrate site.

This sequence belongs to the metallo-dependent hydrolases superfamily. DHOase family. Class I DHOase subfamily. It depends on Zn(2+) as a cofactor.

The enzyme catalyses (S)-dihydroorotate + H2O = N-carbamoyl-L-aspartate + H(+). It participates in pyrimidine metabolism; UMP biosynthesis via de novo pathway; (S)-dihydroorotate from bicarbonate: step 3/3. Functionally, catalyzes the reversible cyclization of carbamoyl aspartate to dihydroorotate. This is Dihydroorotase from Pelotomaculum thermopropionicum (strain DSM 13744 / JCM 10971 / SI).